Here is a 185-residue protein sequence, read N- to C-terminus: Peptidyl-tRNA hydrolase (185 aa).

TRNA is bound at residue Tyr-14. The Proton acceptor role is filled by His-19. Residues Tyr-64, Asn-66, and Asn-112 each coordinate tRNA.

This sequence belongs to the PTH family. Monomer.

The protein localises to the cytoplasm. The enzyme catalyses an N-acyl-L-alpha-aminoacyl-tRNA + H2O = an N-acyl-L-amino acid + a tRNA + H(+). Hydrolyzes ribosome-free peptidyl-tRNAs (with 1 or more amino acids incorporated), which drop off the ribosome during protein synthesis, or as a result of ribosome stalling. Functionally, catalyzes the release of premature peptidyl moieties from peptidyl-tRNA molecules trapped in stalled 50S ribosomal subunits, and thus maintains levels of free tRNAs and 50S ribosomes. This is Peptidyl-tRNA hydrolase from Lactobacillus acidophilus (strain ATCC 700396 / NCK56 / N2 / NCFM).